The sequence spans 162 residues: Large ribosomal subunit protein uL10 (162 aa).

It belongs to the universal ribosomal protein uL10 family. As to quaternary structure, part of the ribosomal stalk of the 50S ribosomal subunit. The N-terminus interacts with L11 and the large rRNA to form the base of the stalk. The C-terminus forms an elongated spine to which L12 dimers bind in a sequential fashion forming a multimeric L10(L12)X complex.

Functionally, forms part of the ribosomal stalk, playing a central role in the interaction of the ribosome with GTP-bound translation factors. In Borreliella burgdorferi (strain ATCC 35210 / DSM 4680 / CIP 102532 / B31) (Borrelia burgdorferi), this protein is Large ribosomal subunit protein uL10 (rplJ).